A 208-amino-acid polypeptide reads, in one-letter code: MASPLPVRAAALSRDTNETSIQIALSIDGGELPQDADPRLLEASSAHASQTSKSQVISINTGIGFLDHMLHALAKHAGWSMALNCKGDLHIDDHHTAEDCCIAVGTTFAKALGALTGVARFGYAYAPLDEALSRAVVDLSNRPYTVVDLGLKREKLGELSCEMIPHCLQSFAQAARITLHVDCLRGDNDHHRAESAFKALAVAVRWYD.

It belongs to the imidazoleglycerol-phosphate dehydratase family.

The enzyme catalyses D-erythro-1-(imidazol-4-yl)glycerol 3-phosphate = 3-(imidazol-4-yl)-2-oxopropyl phosphate + H2O. The protein operates within amino-acid biosynthesis; L-histidine biosynthesis; L-histidine from 5-phospho-alpha-D-ribose 1-diphosphate: step 6/9. The chain is Imidazoleglycerol-phosphate dehydratase (his3) from Trichoderma harzianum (Hypocrea lixii).